Reading from the N-terminus, the 200-residue chain is Charged multivesicular body protein 6 (200 aa).

The N-myristoyl glycine moiety is linked to residue Gly2. Residues 10–145 (QSRVTEQDRA…YQRQIDELLA (136 aa)) adopt a coiled-coil conformation. Ser119 carries the post-translational modification Phosphoserine. At Thr130 the chain carries Phosphothreonine. A Type-2 MIT-interacting motif motif is present at residues 168 to 179 (MELPEVPSEPLP). The segment at 168-200 (MELPEVPSEPLPDRNPEAPAKARSRQAELVAAS) is disordered.

The protein belongs to the SNF7 family. Probable core component of the endosomal sorting required for transport complex III (ESCRT-III). ESCRT-III components are thought to multimerize to form a flat lattice on the perimeter membrane of the endosome. Several assembly forms of ESCRT-III may exist that interact and act sequentially. Interacts with VPS4A; the interaction is direct. Interacts with VPS4B; the interaction is direct. Interacts with CHMP4A, CHMP4B and CHMP4C. Interacts with SNF8, VPS25 and VPS36. Post-translationally, ISGylated in a CHMP5-dependent manner. Isgylation weakens its interaction with VPS4A.

The protein localises to the endomembrane system. Its subcellular location is the endosome membrane. It localises to the late endosome membrane. It is found in the membrane. Its function is as follows. Probable core component of the endosomal sorting required for transport complex III (ESCRT-III) which is involved in multivesicular bodies (MVBs) formation and sorting of endosomal cargo proteins into MVBs. MVBs contain intraluminal vesicles (ILVs) that are generated by invagination and scission from the limiting membrane of the endosome and mostly are delivered to lysosomes enabling degradation of membrane proteins, such as stimulated growth factor receptors, lysosomal enzymes and lipids. The MVB pathway appears to require the sequential function of ESCRT-O, -I,-II and -III complexes. ESCRT-III proteins mostly dissociate from the invaginating membrane before the ILV is released. The ESCRT machinery also functions in topologically equivalent membrane fission events, such as the terminal stages of cytokinesis. ESCRT-III proteins are believed to mediate the necessary vesicle extrusion and/or membrane fission activities, possibly in conjunction with the AAA ATPase VPS4. In the ESCRT-III complex, it probably serves as an acceptor for the ESCRT-II complex on endosomal membranes. The polypeptide is Charged multivesicular body protein 6 (Chmp6) (Mus musculus (Mouse)).